We begin with the raw amino-acid sequence, 691 residues long: MATKRLARQLGLIRRKSIAPANGNLGRSKSKQLFDYLIVIDFESTCWNDGKHHHSQEIIEFPAVLLNTSTGQIDSEFQAYVQPQEHPILSEFCMELTGIKQAQVDEGVPLKICLSQFCKWIHKIQQQKNIIFATGISEPSASEVKLCAFVTWSDWDLGVCLEYECKRKQLLKPVFLNSWIDLRATYKLFYRRKPKGLSGALQEVGIEFSGREHSGLDDSRNTALLAWKMIRDGCVMKITRSLNKVPTKKNFSILARNLNTIQVEEMSACNISIQGPSIYNKEPKNIINPHEKVQMKSICANSPIKAQQDQLQVKNNIKASLHNVKSSLPLFNTKSSTSVGQLQSPTLNSPIYMQKQGKNEHLAFNTKSKASTVGSELVLVSTTVPTVHHVSDLEMSSTLDCLPVLADWEDVVLLPASQPEENVDCTVPISDSDLEISFNSGERLMVLKELEMSSHENFGDIEETPQKSETSKSIVYKSPHTTIYNVKEAKDPGSDISAFKLPEHKSSTFNRVNANMSHPLVLGKHPLLSGGTKRNPCSPQAFPPAKKQPFTIHEEKPTSSDCSPVRSSSWRRLPSILTSTVNLQEPWKSGKMTPPLCKCGRRSKRLVVSNNGPNHGKVFYCCPIGKYQENRKCCGYFKWEQTLQKERANSMVPSHSTGGLTFSSPETSHICDRNLSISTKNSLRLRPSMRN.

Residues 37–226 (LIVIDFESTC…DDSRNTALLA (190 aa)) enclose the Exonuclease domain. Residues D41, E43, and D156 each coordinate Mg(2+). E43 (proton acceptor) is an active-site residue. E43 is an AMP binding site. Catalysis depends on H213, which acts as the Proton acceptor. H213 serves as a coordination point for AMP. D218 provides a ligand contact to Mg(2+). C597, C599, C622, and C634 together coordinate Zn(2+). The segment at 597 to 643 (CKCGRRSKRLVVSNNGPNHGKVFYCCPIGKYQENRKCCGYFKWEQTL) adopts a GRF-type zinc-finger fold.

The protein belongs to the ERI2 family. Mg(2+) is required as a cofactor.

This chain is ERI1 exoribonuclease 2 (ERI2), found in Homo sapiens (Human).